The primary structure comprises 147 residues: Hemoglobin subunit epsilon-4 (147 aa).

In terms of domain architecture, Globin spans 3–147 (HFTTEEKAAV…VANALAHKYH (145 aa)). His64 and His93 together coordinate heme b.

This sequence belongs to the globin family. Red blood cells.

In terms of biological role, hemoglobin epsilon chain is a beta-type chain found in early embryos. This Bos taurus (Bovine) protein is Hemoglobin subunit epsilon-4 (HBE4).